Consider the following 102-residue polypeptide: Colipase-like protein 2 (102 aa).

Positions 1 to 23 are cleaved as a signal peptide; it reads MAFTQALVTVLALLAGTLPHRHS. Disulfide bonds link cysteine 36–cysteine 47, cysteine 42–cysteine 58, cysteine 46–cysteine 80, cysteine 68–cysteine 88, and cysteine 82–cysteine 99.

This sequence belongs to the colipase family.

It localises to the secreted. This chain is Colipase-like protein 2 (Clpsl2), found in Mus musculus (Mouse).